The sequence spans 287 residues: Membrane protein insertase YidC 2 (287 aa).

The N-terminal stretch at 1–26 (MKKKKRFKQKLLIASLVIGLVAVLSG) is a signal peptide. Cys-27 carries N-palmitoyl cysteine lipidation. Cys-27 is lipidated: S-diacylglycerol cysteine. The next 5 membrane-spanning stretches (helical) occupy residues 65 to 85 (YAVG…PLMI), 135 to 155 (MMGC…YQAI), 178 to 198 (YILP…SMMG), 207 to 224 (AMIV…GITL), and 228 to 250 (LALY…NNPF).

It belongs to the OXA1/ALB3/YidC family. Type 2 subfamily.

It localises to the cell membrane. Required for the insertion and/or proper folding and/or complex formation of integral membrane proteins into the membrane. Involved in integration of membrane proteins that insert both dependently and independently of the Sec translocase complex, as well as at least some lipoproteins. The polypeptide is Membrane protein insertase YidC 2 (Listeria innocua serovar 6a (strain ATCC BAA-680 / CLIP 11262)).